A 356-amino-acid polypeptide reads, in one-letter code: Phosphate acyltransferase (356 aa).

Belongs to the PlsX family. As to quaternary structure, homodimer. Probably interacts with PlsY.

Its subcellular location is the cytoplasm. The catalysed reaction is a fatty acyl-[ACP] + phosphate = an acyl phosphate + holo-[ACP]. The protein operates within lipid metabolism; phospholipid metabolism. Catalyzes the reversible formation of acyl-phosphate (acyl-PO(4)) from acyl-[acyl-carrier-protein] (acyl-ACP). This enzyme utilizes acyl-ACP as fatty acyl donor, but not acyl-CoA. The polypeptide is Phosphate acyltransferase (Shigella boydii serotype 4 (strain Sb227)).